Consider the following 319-residue polypeptide: tRNA-cytidine(32) 2-sulfurtransferase (319 aa).

Positions 43–48 (SGGKDS) match the PP-loop motif motif. The [4Fe-4S] cluster site is built by C118, C121, and C209.

Belongs to the TtcA family. In terms of assembly, homodimer. Requires Mg(2+) as cofactor. [4Fe-4S] cluster serves as cofactor.

It is found in the cytoplasm. It carries out the reaction cytidine(32) in tRNA + S-sulfanyl-L-cysteinyl-[cysteine desulfurase] + AH2 + ATP = 2-thiocytidine(32) in tRNA + L-cysteinyl-[cysteine desulfurase] + A + AMP + diphosphate + H(+). Its pathway is tRNA modification. In terms of biological role, catalyzes the ATP-dependent 2-thiolation of cytidine in position 32 of tRNA, to form 2-thiocytidine (s(2)C32). The sulfur atoms are provided by the cysteine/cysteine desulfurase (IscS) system. In Neisseria meningitidis serogroup C (strain 053442), this protein is tRNA-cytidine(32) 2-sulfurtransferase.